Reading from the N-terminus, the 236-residue chain is Orotidine 5'-phosphate decarboxylase (236 aa).

Residues aspartate 16, lysine 38, 65–74, threonine 123, arginine 184, glutamine 193, glycine 213, and arginine 214 each bind substrate; that span reads DLKLHDIGNT. Lysine 67 serves as the catalytic Proton donor.

This sequence belongs to the OMP decarboxylase family. Type 1 subfamily. In terms of assembly, homodimer.

The catalysed reaction is orotidine 5'-phosphate + H(+) = UMP + CO2. It participates in pyrimidine metabolism; UMP biosynthesis via de novo pathway; UMP from orotate: step 2/2. Its function is as follows. Catalyzes the decarboxylation of orotidine 5'-monophosphate (OMP) to uridine 5'-monophosphate (UMP). The sequence is that of Orotidine 5'-phosphate decarboxylase from Methylobacterium nodulans (strain LMG 21967 / CNCM I-2342 / ORS 2060).